The primary structure comprises 474 residues: Capsid vertex component 1 (474 aa).

Belongs to the herpesviridae CVC1 protein family. Interacts (via C-terminus) with capsid vertex component 2/CVC2.

It localises to the virion. The protein localises to the host nucleus. Functionally, capsid vertex-specific component that plays a role during viral DNA encapsidation, assuring correct genome cleavage and presumably stabilizing capsids that contain full-length viral genomes. The protein is Capsid vertex component 1 of Alcelaphine herpesvirus 1 (strain C500) (AlHV-1).